A 205-amino-acid chain; its full sequence is Protein N-terminal glutamine amidohydrolase (205 aa).

Residues Cys-20, His-74, and Asp-90 contribute to the active site.

It belongs to the NTAQ1 family. In terms of assembly, monomer.

The catalysed reaction is N-terminal L-glutaminyl-[protein] + H2O = N-terminal L-glutamyl-[protein] + NH4(+). Mediates the side-chain deamidation of N-terminal glutamine residues to glutamate, an important step in N-end rule pathway of protein degradation. Conversion of the resulting N-terminal glutamine to glutamate renders the protein susceptible to arginylation, polyubiquitination and degradation as specified by the N-end rule. Does not act on substrates with internal or C-terminal glutamine and does not act on non-glutamine residues in any position. In Drosophila melanogaster (Fruit fly), this protein is Protein N-terminal glutamine amidohydrolase (tun).